The following is a 209-amino-acid chain: Ras-like GTP-binding protein RYL2 (209 aa).

12-19 (GAQGVGKT) is a GTP binding site. The Effector region signature appears at 34–42 (QASTIGASF). Residues 60 to 64 (DTAGQ) and 118 to 121 (TKVD) each bind GTP. 2 S-geranylgeranyl cysteine lipidation sites follow: cysteine 208 and cysteine 209.

Belongs to the small GTPase superfamily. Rab family.

The protein localises to the cell membrane. Protein transport. Probably involved in vesicular traffic. This is Ras-like GTP-binding protein RYL2 (RYL2) from Yarrowia lipolytica (strain CLIB 122 / E 150) (Yeast).